Consider the following 256-residue polypeptide: ATP synthase subunit a (256 aa).

Residues 1-8 constitute a propeptide, removed in mature form; the sequence is MYQFNFIL. The next 7 membrane-spanning stretches (helical) occupy residues 34-54, 92-112, 121-141, 148-168, 186-206, 209-229, and 230-250; these read ITNIGLYLSIGLLLTLGYHLL, YFPFIYALFIFILVNNLIGMV, HFILTFSMSFTIVLGATFLGL, FFSLFVPSGCPLGLLPLLVLI, ANILSGHMLLSILSGFTYNIM, GILFFFLGLIPLAFIIAFSGL, and ELAIAFIQAQVFVVLTCSYIK.

It belongs to the ATPase A chain family. In terms of assembly, F-type ATPases have 2 components, CF(1) - the catalytic core - and CF(0) - the membrane proton channel. CF(1) has five subunits: alpha(3), beta(3), gamma(1), delta(1), epsilon(1). CF(0) has three main subunits: a, b and c.

The protein resides in the mitochondrion inner membrane. Mitochondrial membrane ATP synthase (F(1)F(0) ATP synthase or Complex V) produces ATP from ADP in the presence of a proton gradient across the membrane which is generated by electron transport complexes of the respiratory chain. F-type ATPases consist of two structural domains, F(1) - containing the extramembraneous catalytic core and F(0) - containing the membrane proton channel, linked together by a central stalk and a peripheral stalk. During catalysis, ATP synthesis in the catalytic domain of F(1) is coupled via a rotary mechanism of the central stalk subunits to proton translocation. Key component of the proton channel; it may play a direct role in the translocation of protons across the membrane. This chain is ATP synthase subunit a (atp6), found in Emericella nidulans (Aspergillus nidulans).